We begin with the raw amino-acid sequence, 130 residues long: Small ribosomal subunit protein uS11 (130 aa).

The protein belongs to the universal ribosomal protein uS11 family. In terms of assembly, part of the 30S ribosomal subunit. Interacts with proteins S7 and S18. Binds to IF-3.

Located on the platform of the 30S subunit, it bridges several disparate RNA helices of the 16S rRNA. Forms part of the Shine-Dalgarno cleft in the 70S ribosome. In Blochmanniella floridana, this protein is Small ribosomal subunit protein uS11.